The chain runs to 139 residues: TDP-4-oxo-6-deoxy-alpha-D-glucose-3,4-oxoisomerase (139 aa).

Catalysis depends on H49, which acts as the Proton acceptor.

Homodimer.

It carries out the reaction dTDP-4-dehydro-6-deoxy-alpha-D-glucose = dTDP-3-dehydro-6-deoxy-alpha-D-galactose. Functionally, mediates the isomerization of dTDP-6-deoxy-D-xylohex-4-ulose into dTDP-6-deoxy-D-xylohex-3-ulose in the biosynthesis of dTDP-3-acetamido-3,6-dideoxy-alpha-D-galactose, a glycan chain of the S-layer. This is TDP-4-oxo-6-deoxy-alpha-D-glucose-3,4-oxoisomerase (fdtA) from Aneurinibacillus thermoaerophilus.